A 464-amino-acid chain; its full sequence is Soluble pyridine nucleotide transhydrogenase (464 aa).

35 to 44 (DDRRQVGGNC) is an FAD binding site.

The protein belongs to the class-I pyridine nucleotide-disulfide oxidoreductase family. Requires FAD as cofactor.

The protein resides in the cytoplasm. The enzyme catalyses NAD(+) + NADPH = NADH + NADP(+). Conversion of NADPH, generated by peripheral catabolic pathways, to NADH, which can enter the respiratory chain for energy generation. The sequence is that of Soluble pyridine nucleotide transhydrogenase from Pseudomonas putida (strain GB-1).